The sequence spans 122 residues: MPPKPSGKGQKKAGKAKGAPSTNKKRKRKRKESYGIYIYKVMKQVHPDTGISSKAMSIMNSFVNDIFERIAAEASRLAHYNKKSTITSREVQTAVRLLLPGELAKHAVSEGTKAVTKYTTSK.

A disordered region spans residues 1 to 31 (MPPKPSGKGQKKAGKAKGAPSTNKKRKRKRK). The residue at position 2 (P2) is a N,N-dimethylproline. Residue Q10 forms an Isoglutamyl lysine isopeptide (Gln-Lys) (interchain with K-5 in histone H4) linkage. A glycan (O-linked (GlcNAc) serine) is linked at S109. A Glycyl lysine isopeptide (Lys-Gly) (interchain with G-Cter in ubiquitin) cross-link involves residue K117.

The protein belongs to the histone H2B family. In terms of assembly, the nucleosome is a histone octamer containing two molecules each of H2A, H2B, H3 and H4 assembled in one H3-H4 heterotetramer and two H2A-H2B heterodimers. The octamer wraps approximately 147 bp of DNA. In terms of processing, monoubiquitination of Lys-117 gives a specific tag for epigenetic transcriptional activation and is also prerequisite for histone H3 'Lys-4' and 'Lys-79' methylation. Post-translationally, glcNAcylation at Ser-109 promotes monoubiquitination of Lys-117. It fluctuates in response to extracellular glucose, and associates with transcribed genes.

It localises to the nucleus. It is found in the chromosome. Core component of nucleosome. Nucleosomes wrap and compact DNA into chromatin, limiting DNA accessibility to the cellular machineries which require DNA as a template. Histones thereby play a central role in transcription regulation, DNA repair, DNA replication and chromosomal stability. DNA accessibility is regulated via a complex set of post-translational modifications of histones, also called histone code, and nucleosome remodeling. The polypeptide is Histone H2B (Patiria pectinifera (Starfish)).